The sequence spans 406 residues: Endoglucanase 1 (406 aa).

The N-terminal stretch at 1–43 is a signal peptide; it reads MNSKKIGAMIAAAVLSLIVMTPAATRKIVQRQTRNSSTAVENS. Polar residues-rich tracts occupy residues 30–41 and 51–62; these read QRQTRNSSTAVE and ENVPVSQTHTND. Positions 30 to 62 are disordered; it reads QRQTRNSSTAVENSAADESETENVPVSQTHTND. E210 functions as the Proton donor in the catalytic mechanism. E330 (nucleophile) is an active-site residue.

The protein belongs to the glycosyl hydrolase 5 (cellulase A) family.

It carries out the reaction Endohydrolysis of (1-&gt;4)-beta-D-glucosidic linkages in cellulose, lichenin and cereal beta-D-glucans.. The sequence is that of Endoglucanase 1 (Eg I) from Ruminococcus albus.